We begin with the raw amino-acid sequence, 524 residues long: Bifunctional purine biosynthesis protein PurH (524 aa).

The region spanning 1-145 (MIQQALLSVS…KNHRDVTVIV (145 aa)) is the MGS-like domain.

This sequence belongs to the PurH family.

It carries out the reaction (6R)-10-formyltetrahydrofolate + 5-amino-1-(5-phospho-beta-D-ribosyl)imidazole-4-carboxamide = 5-formamido-1-(5-phospho-D-ribosyl)imidazole-4-carboxamide + (6S)-5,6,7,8-tetrahydrofolate. The enzyme catalyses IMP + H2O = 5-formamido-1-(5-phospho-D-ribosyl)imidazole-4-carboxamide. It participates in purine metabolism; IMP biosynthesis via de novo pathway; 5-formamido-1-(5-phospho-D-ribosyl)imidazole-4-carboxamide from 5-amino-1-(5-phospho-D-ribosyl)imidazole-4-carboxamide (10-formyl THF route): step 1/1. Its pathway is purine metabolism; IMP biosynthesis via de novo pathway; IMP from 5-formamido-1-(5-phospho-D-ribosyl)imidazole-4-carboxamide: step 1/1. In Ralstonia pickettii (strain 12J), this protein is Bifunctional purine biosynthesis protein PurH.